The primary structure comprises 156 residues: RNA pyrophosphohydrolase (156 aa).

Residues 6 to 148 (NYRPNVAAIV…KKNIYVKVIK (143 aa)) form the Nudix hydrolase domain. Positions 43-64 (GGIDKGESAKNALFRELKEEIG) match the Nudix box motif.

The protein belongs to the Nudix hydrolase family. RppH subfamily. It depends on a divalent metal cation as a cofactor.

In terms of biological role, accelerates the degradation of transcripts by removing pyrophosphate from the 5'-end of triphosphorylated RNA, leading to a more labile monophosphorylated state that can stimulate subsequent ribonuclease cleavage. The chain is RNA pyrophosphohydrolase from Campylobacter jejuni subsp. doylei (strain ATCC BAA-1458 / RM4099 / 269.97).